Reading from the N-terminus, the 268-residue chain is Tryptophan synthase alpha chain (268 aa).

Catalysis depends on proton acceptor residues Glu-49 and Asp-60.

It belongs to the TrpA family. Tetramer of two alpha and two beta chains.

It catalyses the reaction (1S,2R)-1-C-(indol-3-yl)glycerol 3-phosphate + L-serine = D-glyceraldehyde 3-phosphate + L-tryptophan + H2O. The protein operates within amino-acid biosynthesis; L-tryptophan biosynthesis; L-tryptophan from chorismate: step 5/5. The alpha subunit is responsible for the aldol cleavage of indoleglycerol phosphate to indole and glyceraldehyde 3-phosphate. In Shigella sonnei (strain Ss046), this protein is Tryptophan synthase alpha chain.